Consider the following 415-residue polypeptide: Serine hydroxymethyltransferase (415 aa).

(6S)-5,6,7,8-tetrahydrofolate-binding positions include L117 and 121 to 123 (GHL). Position 225 is an N6-(pyridoxal phosphate)lysine (K225). Residues E241 and 349-351 (SPF) each bind (6S)-5,6,7,8-tetrahydrofolate.

The protein belongs to the SHMT family. In terms of assembly, homodimer. It depends on pyridoxal 5'-phosphate as a cofactor.

It is found in the cytoplasm. It carries out the reaction (6R)-5,10-methylene-5,6,7,8-tetrahydrofolate + glycine + H2O = (6S)-5,6,7,8-tetrahydrofolate + L-serine. It functions in the pathway one-carbon metabolism; tetrahydrofolate interconversion. Its pathway is amino-acid biosynthesis; glycine biosynthesis; glycine from L-serine: step 1/1. In terms of biological role, catalyzes the reversible interconversion of serine and glycine with tetrahydrofolate (THF) serving as the one-carbon carrier. This reaction serves as the major source of one-carbon groups required for the biosynthesis of purines, thymidylate, methionine, and other important biomolecules. Also exhibits THF-independent aldolase activity toward beta-hydroxyamino acids, producing glycine and aldehydes, via a retro-aldol mechanism. This is Serine hydroxymethyltransferase from Campylobacter hominis (strain ATCC BAA-381 / DSM 21671 / CCUG 45161 / LMG 19568 / NCTC 13146 / CH001A).